A 462-amino-acid polypeptide reads, in one-letter code: Chromosomal replication initiator protein DnaA (462 aa).

Residues 1–84 (MAVSLWQQCI…RFDIGSRPSA (84 aa)) form a domain I, interacts with DnaA modulators region. Positions 84 to 125 (AKKPSVPAPIAPTRVANTQTKATVGTTFNVQAEPMANANHRS) are domain II. Residues 126–342 (NINPSYQFDN…GALNRVIANA (217 aa)) form a domain III, AAA+ region region. 4 residues coordinate ATP: Gly-170, Gly-172, Lys-173, and Thr-174. Residues 343–462 (NFTGRPITID…YANLIRTLSS (120 aa)) are domain IV, binds dsDNA.

The protein belongs to the DnaA family. As to quaternary structure, oligomerizes as a right-handed, spiral filament on DNA at oriC.

The protein resides in the cytoplasm. In terms of biological role, plays an essential role in the initiation and regulation of chromosomal replication. ATP-DnaA binds to the origin of replication (oriC) to initiate formation of the DNA replication initiation complex once per cell cycle. Binds the DnaA box (a 9 base pair repeat at the origin) and separates the double-stranded (ds)DNA. Forms a right-handed helical filament on oriC DNA; dsDNA binds to the exterior of the filament while single-stranded (ss)DNA is stabiized in the filament's interior. The ATP-DnaA-oriC complex binds and stabilizes one strand of the AT-rich DNA unwinding element (DUE), permitting loading of DNA polymerase. After initiation quickly degrades to an ADP-DnaA complex that is not apt for DNA replication. Binds acidic phospholipids. This Shewanella baltica (strain OS195) protein is Chromosomal replication initiator protein DnaA.